A 768-amino-acid chain; its full sequence is DNA ligase (768 aa).

Over residues 1–11 (MSPSAPANSAP) the composition is skewed to low complexity. Residues 1 to 28 (MSPSAPANSAPDPDRNGVPDVGPASAAP) are disordered. Residues 62–66 (DAEYD), 111–112 (SI), and Glu-148 each bind NAD(+). Lys-150 functions as the N6-AMP-lysine intermediate in the catalytic mechanism. The NAD(+) site is built by Arg-171, Glu-238, Lys-361, and Lys-385. Residues Cys-484, Cys-487, Cys-502, and Cys-508 each contribute to the Zn(2+) site. The BRCT domain maps to 670-759 (AAELPLAGKT…EADADADAEG (90 aa)).

The protein belongs to the NAD-dependent DNA ligase family. LigA subfamily. It depends on Mg(2+) as a cofactor. Mn(2+) is required as a cofactor.

The catalysed reaction is NAD(+) + (deoxyribonucleotide)n-3'-hydroxyl + 5'-phospho-(deoxyribonucleotide)m = (deoxyribonucleotide)n+m + AMP + beta-nicotinamide D-nucleotide.. In terms of biological role, DNA ligase that catalyzes the formation of phosphodiester linkages between 5'-phosphoryl and 3'-hydroxyl groups in double-stranded DNA using NAD as a coenzyme and as the energy source for the reaction. It is essential for DNA replication and repair of damaged DNA. In Leptothrix cholodnii (strain ATCC 51168 / LMG 8142 / SP-6) (Leptothrix discophora (strain SP-6)), this protein is DNA ligase.